The following is a 146-amino-acid chain: Putative actin-depolymerizing factor 8 (146 aa).

The region spanning 14 to 144 (PAWIEVPEKS…DLEVLRGRAN (131 aa)) is the ADF-H domain.

The protein belongs to the actin-binding proteins ADF family.

Its function is as follows. Actin-depolymerizing protein. Severs actin filaments (F-actin) and binds to actin monomers. The polypeptide is Putative actin-depolymerizing factor 8 (ADF8) (Oryza sativa subsp. japonica (Rice)).